The sequence spans 200 residues: MIKLIVGLGNPGAEYAATRHNAGFWLVDQLARMGHVTLRNETRFHGYAARATLWSHEVWLLQPQTFMNRSGLATVALARFYKILPDEILVVHDELDLLPGAVKLKLGGGSGGHNGLKDIAAHLTTQQFWRLRVGIGHPRNLLPPGTAPSGQHDVANFVLKAPRREEQELIDRAIDRSLDALPDLVAGNAERAMMRLHTTG.

Tyr15 is a binding site for tRNA. The Proton acceptor role is filled by His20. The tRNA site is built by Phe66, Asn68, and Asn114.

The protein belongs to the PTH family. As to quaternary structure, monomer.

It is found in the cytoplasm. It carries out the reaction an N-acyl-L-alpha-aminoacyl-tRNA + H2O = an N-acyl-L-amino acid + a tRNA + H(+). Functionally, hydrolyzes ribosome-free peptidyl-tRNAs (with 1 or more amino acids incorporated), which drop off the ribosome during protein synthesis, or as a result of ribosome stalling. In terms of biological role, catalyzes the release of premature peptidyl moieties from peptidyl-tRNA molecules trapped in stalled 50S ribosomal subunits, and thus maintains levels of free tRNAs and 50S ribosomes. The protein is Peptidyl-tRNA hydrolase of Ralstonia nicotianae (strain ATCC BAA-1114 / GMI1000) (Ralstonia solanacearum).